A 457-amino-acid polypeptide reads, in one-letter code: Multidrug resistance protein MdtK (457 aa).

12 helical membrane-spanning segments follow: residues 11-31, 53-73, 93-113, 127-147, 160-180, 189-209, 243-263, 276-296, 314-334, 350-370, 387-407, and 418-438; these read LLAL…MGFV, IWLP…PVIA, WLAG…GYII, AVGY…FQVA, GMVM…IFIY, GGVG…LAMV, LPIA…ALLV, IALN…AAVT, AART…IFTV, VVTL…SDSI, IFYI…YILA, and PAGF…MMML.

Belongs to the multi antimicrobial extrusion (MATE) (TC 2.A.66.1) family. MdtK subfamily.

The protein resides in the cell inner membrane. Its function is as follows. Multidrug efflux pump that functions probably as a Na(+)/drug antiporter. This chain is Multidrug resistance protein MdtK, found in Escherichia coli (strain SE11).